We begin with the raw amino-acid sequence, 339 residues long: Probable thylakoid lumen protein sll0997 (339 aa).

The first 26 residues, 1 to 26 (MAPYQSFHIGLLGLALASVWPLSACA), serve as a signal peptide directing secretion.

It localises to the cellular thylakoid lumen. The polypeptide is Probable thylakoid lumen protein sll0997 (Synechocystis sp. (strain ATCC 27184 / PCC 6803 / Kazusa)).